Consider the following 394-residue polypeptide: Ribulose bisphosphate carboxylase large chain (394 aa).

Lys5 carries the N6,N6,N6-trimethyllysine modification. 2 residues coordinate substrate: Asn114 and Thr164. The active-site Proton acceptor is the Lys166. Lys168 serves as a coordination point for substrate. Positions 192, 194, and 195 each coordinate Mg(2+). Residue Lys192 is modified to N6-carboxylysine. The Proton acceptor role is filled by His285. Positions 286, 318, and 370 each coordinate substrate.

This sequence belongs to the RuBisCO large chain family. Type I subfamily. In terms of assembly, heterohexadecamer of 8 large chains and 8 small chains; disulfide-linked. The disulfide link is formed within the large subunit homodimers. Requires Mg(2+) as cofactor. The disulfide bond which can form in the large chain dimeric partners within the hexadecamer appears to be associated with oxidative stress and protein turnover.

Its subcellular location is the plastid. It localises to the chloroplast. The catalysed reaction is 2 (2R)-3-phosphoglycerate + 2 H(+) = D-ribulose 1,5-bisphosphate + CO2 + H2O. It carries out the reaction D-ribulose 1,5-bisphosphate + O2 = 2-phosphoglycolate + (2R)-3-phosphoglycerate + 2 H(+). In terms of biological role, ruBisCO catalyzes two reactions: the carboxylation of D-ribulose 1,5-bisphosphate, the primary event in carbon dioxide fixation, as well as the oxidative fragmentation of the pentose substrate in the photorespiration process. Both reactions occur simultaneously and in competition at the same active site. This Nelumbo lutea (American lotus) protein is Ribulose bisphosphate carboxylase large chain (rbcL).